Here is a 178-residue protein sequence, read N- to C-terminus: Protein FAM89A (178 aa).

It belongs to the FAM89 family.

The polypeptide is Protein FAM89A (FAM89A) (Bos taurus (Bovine)).